The primary structure comprises 476 residues: Calcium uptake protein 1, mitochondrial (476 aa).

A mitochondrion-targeting transit peptide spans 1 to 33; the sequence is MFRLNSLSALAELAVGSRWYHGGSQPIQIRRRL. Positions 68 to 106 are disordered; it reads SDIGDKGKNKDEGDVCNHEKKTADLAPHPEEKKKKRSGF. The polybasic region stretch occupies residues 99–110; it reads KKKKRSGFRDRK. Residue Ser-122 is modified to Phosphoserine. The interval 126 to 129 is k/R-ring; sequence KIFR. An EF-hand 1 domain is found at 218-253; that stretch reads TPQRNFEIAFKMFDLNGDGEVDMEEFEQVQSIIRSQ. Residues Asp-231, Asn-233, Asp-235, Glu-237, and Glu-242 each contribute to the Ca(2+) site. The interval 259 to 263 is k/R-ring; it reads RHRDR. Positions 408-443 constitute an EF-hand 2 domain; that stretch reads LSDHVCDVVFALFDCDGNGELSNKEFVSIMKQRLMR. Asp-421, Asp-423, Asn-425, Glu-427, and Glu-432 together coordinate Ca(2+). Position 455 is an asymmetric dimethylarginine (Arg-455). The C-helix region stretch occupies residues 455 to 465; it reads RLMQAMWKCAQ.

Belongs to the MICU1 family. MICU1 subfamily. Heterodimer; disulfide-linked; heterodimerizes with MICU2 or MICU3. Homodimer; disulfide-linked. Component of the uniplex complex, composed of MCU, EMRE/SMDT1, MICU1 and MICU2 (or MICU3) in a 4:4:1:1 stoichiometry. The composition of calcium sensors within the uniplex complex can differ depending on tissues: a MICU1 homodimer can be present instead of the MICU1-MICU2 heterodimer in skeletal-muscle and kidney. MICU1 is recruited to the uniplex complex by EMRE/SMDT1, and it associates with MCU at low calcium levels, occluding the pore of the MCU channel. Associates with the MICOS complex. Interacts with SLC25A23. Interacts with CHCHD4/MIA40; which introduces the interchain disulfide bond with MICU2. Interacts (when methylated) with UCP2; leading to decrease the calcium sensitivity of MICU1. In terms of processing, phosphorylation at Ser-122 by AKT1 impairs its maturation and stability. Asymmetric dimethylation at Arg-455 by PRMT1 decreases the calcium sensitivity of MICU1 by promoting interaction with UCP2. Post-translationally, degraded by YME1L1 when not complexed as homodimer or heterodimer. Not degraded when complexed as homodimer or heterodimer; the presence of the interchain disulfide bond protecting MICU1 from degradation by YME1L1. Expressed in epithelial cell lines. Strongly expressed in epidermal keratinocytes and dermal endothelial cells.

It localises to the mitochondrion intermembrane space. It is found in the mitochondrion inner membrane. Activated by spermine, kaempferol and SB202190, which bind MICU1 and prevent MCU pore occlusion in absence of calcium. In terms of biological role, calcium sensor of the mitochondrial calcium uniporter (MCU) channel, which senses calcium level via its EF-hand domains. MICU1 and MICU2 (or MICU3) form a disulfide-linked heterodimer that stimulates and inhibits MCU activity, depending on the concentration of calcium. At low calcium levels, MICU1 occludes the pore of the MCU channel, preventing mitochondrial calcium uptake. At higher calcium levels, calcium-binding to MICU1 and MICU2 (or MICU3) induces a conformational change that weakens MCU-MICU1 interactions and moves the MICU1-MICU2 heterodimer away from the pore, allowing calcium permeation through the MCU channel. Also required to protect against manganese toxicity by preventing manganese uptake by MCU: mechanistically, manganese-binding to its EF-hand domains does not induce any conformational change, maintaining MCU pore occlusion. Also acts as a barrier for inhibitors of the MCU channel, such as ruthenium red or its derivative Ru360. Acts as a regulator of mitochondrial cristae structure independently of its ability to regulate the mitochondrial calcium uniporter channel. Regulates glucose-dependent insulin secretion in pancreatic beta-cells by regulating mitochondrial calcium uptake. Induces T-helper 1-mediated autoreactivity, which is accompanied by the release of IFNG. Isoform that regulates mitochondrial calcium uniporter (MCU) in the skeletal muscle. Compared to other isoforms, this isoform has higher affinity for calcium, promoting mitochondrial calcium uptake at lower calcium concentrations. This allows a rapid response of mitochondrial metabolism and ensures sustained ATP production needed for resistance and strenuous exercise. This chain is Calcium uptake protein 1, mitochondrial, found in Homo sapiens (Human).